We begin with the raw amino-acid sequence, 429 residues long: 3-phosphoshikimate 1-carboxyvinyltransferase (429 aa).

3-phosphoshikimate contacts are provided by Lys11, Ser12, and Arg16. Residue Lys11 participates in phosphoenolpyruvate binding. Residues Gly82 and Arg110 each coordinate phosphoenolpyruvate. Ser155, Gln157, Asp302, and Lys329 together coordinate 3-phosphoshikimate. Gln157 lines the phosphoenolpyruvate pocket. The active-site Proton acceptor is the Asp302. Residues Arg333 and Arg385 each contribute to the phosphoenolpyruvate site.

Belongs to the EPSP synthase family. Monomer.

It localises to the cytoplasm. It catalyses the reaction 3-phosphoshikimate + phosphoenolpyruvate = 5-O-(1-carboxyvinyl)-3-phosphoshikimate + phosphate. Its pathway is metabolic intermediate biosynthesis; chorismate biosynthesis; chorismate from D-erythrose 4-phosphate and phosphoenolpyruvate: step 6/7. In terms of biological role, catalyzes the transfer of the enolpyruvyl moiety of phosphoenolpyruvate (PEP) to the 5-hydroxyl of shikimate-3-phosphate (S3P) to produce enolpyruvyl shikimate-3-phosphate and inorganic phosphate. This Helicobacter pylori (strain P12) protein is 3-phosphoshikimate 1-carboxyvinyltransferase.